Here is a 279-residue protein sequence, read N- to C-terminus: NAD kinase (279 aa).

Aspartate 57 functions as the Proton acceptor in the catalytic mechanism. Residues 57-58, 133-134, arginine 159, aspartate 161, 172-177, and alanine 196 contribute to the NAD(+) site; these read DG, NE, and TAYNKS.

The protein belongs to the NAD kinase family. Requires a divalent metal cation as cofactor.

It is found in the cytoplasm. The enzyme catalyses NAD(+) + ATP = ADP + NADP(+) + H(+). Its function is as follows. Involved in the regulation of the intracellular balance of NAD and NADP, and is a key enzyme in the biosynthesis of NADP. Catalyzes specifically the phosphorylation on 2'-hydroxyl of the adenosine moiety of NAD to yield NADP. The sequence is that of NAD kinase from Streptococcus thermophilus (strain CNRZ 1066).